We begin with the raw amino-acid sequence, 408 residues long: Zinc finger protein 764 (408 aa).

One can recognise a KRAB domain in the interval 26–97 (VSFADVAVYF…AAQDPEVAKC (72 aa)). A disordered region spans residues 91 to 167 (DPEVAKCQTQ…GRPSLCAHPP (77 aa)). 7 consecutive C2H2-type zinc fingers follow at residues 175–197 (HGCYVCGKSFAWRSTLVEHVYSH), 203–225 (FHCTDCGKGFGHASSLSKHRAIH), 231–253 (HRCLECGRAFTQRSALTSHLRVH), 259–281 (YGCADCGRRFSQSSALYQHRRVH), 287–309 (FPCPDCGRAFAYPSDLRRHVRTH), 315–337 (YPCPDCGRCFRQSSEMAAHRRTH), and 343–365 (YPCPQCGRRFGQKSAVAKHQWVH).

This sequence belongs to the krueppel C2H2-type zinc-finger protein family. In terms of assembly, interacts (via KRAB domain) with NR3C1/GR (via NR LBD domain); the interaction regulates transcription factor activity of NR3C1 by directing its actions toward certain biologic pathways.

Its subcellular location is the nucleus. Functionally, zinc finger protein that functions as a cofactor for steroid hormone receptors, such as NR3C1/GR. Directs NR3C1/GR transcriptional activity toward specific biologic pathways by changing NR3C1/GR binding and transcriptional activity on the glucocorticoid-responsive genes. This Homo sapiens (Human) protein is Zinc finger protein 764.